A 421-amino-acid chain; its full sequence is Isocitrate dehydrogenase [NADP], mitochondrial (421 aa).

The N-terminal 8 residues, alanine 1 to tyrosine 8, are a transit peptide targeting the mitochondrion. Lysine 14, lysine 17, lysine 36, and lysine 38 each carry N6-acetyllysine. N6-acetyllysine; alternate is present on residues lysine 49 and lysine 75. An N6-succinyllysine; alternate mark is found at lysine 49 and lysine 75. NADP(+)-binding positions include threonine 84–threonine 86 and arginine 91. Residue threonine 86 coordinates D-threo-isocitrate. Residues serine 103–arginine 109 and arginine 118 contribute to the D-threo-isocitrate site. N6-acetyllysine is present on lysine 124. Lysine 135 carries the post-translational modification N6-acetyllysine; alternate. The residue at position 135 (lysine 135) is an N6-succinyllysine; alternate. Arginine 141 provides a ligand contact to D-threo-isocitrate. N6-acetyllysine; alternate is present on residues lysine 149 and lysine 162. 2 positions are modified to N6-succinyllysine; alternate: lysine 149 and lysine 162. At lysine 168 the chain carries N6-acetyllysine. Position 225 is an N6-acetyllysine; alternate (lysine 225). Residue lysine 225 is modified to N6-succinyllysine; alternate. 4 positions are modified to N6-acetyllysine: lysine 232, lysine 241, lysine 244, and lysine 249. Lysine 251 bears the N6-acetyllysine; alternate mark. Lysine 251 carries the post-translational modification N6-succinyllysine; alternate. Mn(2+) is bound at residue aspartate 260. Lysine 268 contacts NADP(+). Aspartate 283 is a Mn(2+) binding site. NADP(+)-binding positions include glycine 318–histidine 323 and asparagine 336. Lysine 353 carries the post-translational modification N6-acetyllysine; alternate. An N6-succinyllysine; alternate modification is found at lysine 353. N6-acetyllysine occurs at positions 369, 382, and 411.

The protein belongs to the isocitrate and isopropylmalate dehydrogenases family. Homodimer. It depends on Mg(2+) as a cofactor. Mn(2+) serves as cofactor. In terms of processing, acetylation at Lys-382 dramatically reduces catalytic activity. Deacetylated by SIRT3.

It localises to the mitochondrion. The enzyme catalyses D-threo-isocitrate + NADP(+) = 2-oxoglutarate + CO2 + NADPH. Functionally, plays a role in intermediary metabolism and energy production. It may tightly associate or interact with the pyruvate dehydrogenase complex. This is Isocitrate dehydrogenase [NADP], mitochondrial (IDH2) from Sus scrofa (Pig).